Consider the following 176-residue polypeptide: Large ribosomal subunit protein uL6 (176 aa).

The protein belongs to the universal ribosomal protein uL6 family. Part of the 50S ribosomal subunit.

Its function is as follows. This protein binds to the 23S rRNA, and is important in its secondary structure. It is located near the subunit interface in the base of the L7/L12 stalk, and near the tRNA binding site of the peptidyltransferase center. The chain is Large ribosomal subunit protein uL6 from Lacticaseibacillus paracasei (strain ATCC 334 / BCRC 17002 / CCUG 31169 / CIP 107868 / KCTC 3260 / NRRL B-441) (Lactobacillus paracasei).